The following is a 241-amino-acid chain: MATVSMRDMLKAGVHFGHQTRYWNPKMKPFIFGARNKVHIINLEKTVPMFNEALAELNKISARKGKILFVGTKRAASEAVKEAANSCDQFFVNHRWLGGMLTNWKTVRQSIKRLKDLETQSQDGTFDKLTKKEALMRTRELDKLENSLGGIKDMGGLPDALFVIDADHEHIAIKEANNLGIPVFAIVDTNSDPDGVDFVIPGNDDAIRAVSLYLGAVAATVREGRSQDLASQAEESFVEAE.

This sequence belongs to the universal ribosomal protein uS2 family.

The polypeptide is Small ribosomal subunit protein uS2 (Klebsiella pneumoniae (strain 342)).